Reading from the N-terminus, the 316-residue chain is Pantothenate kinase (316 aa).

ATP is bound at residue 95–102; sequence GSVAVGKS.

Belongs to the prokaryotic pantothenate kinase family.

The protein localises to the cytoplasm. It carries out the reaction (R)-pantothenate + ATP = (R)-4'-phosphopantothenate + ADP + H(+). The protein operates within cofactor biosynthesis; coenzyme A biosynthesis; CoA from (R)-pantothenate: step 1/5. The protein is Pantothenate kinase of Sodalis glossinidius (strain morsitans).